The chain runs to 156 residues: Small ribosomal subunit protein uS7 (156 aa).

It belongs to the universal ribosomal protein uS7 family. Part of the 30S ribosomal subunit. Contacts proteins S9 and S11.

Functionally, one of the primary rRNA binding proteins, it binds directly to 16S rRNA where it nucleates assembly of the head domain of the 30S subunit. Is located at the subunit interface close to the decoding center, probably blocks exit of the E-site tRNA. The polypeptide is Small ribosomal subunit protein uS7 (Clostridium perfringens (strain ATCC 13124 / DSM 756 / JCM 1290 / NCIMB 6125 / NCTC 8237 / Type A)).